Here is a 123-residue protein sequence, read N- to C-terminus: Methicillin resistance regulatory protein MecI (123 aa).

A DNA-binding region (H-T-H motif) is located at residues 7–71 (EISSAEWEVM…KDNKIFQYYS (65 aa)). Residues 74-123 (EESDIKYKTSKNFINKVYKGGFNSLVLNFVEKEDLSQDEIEELRNILNKK) are important for dimerization.

Belongs to the BlaI transcriptional regulatory family. In terms of assembly, monomer and homodimer. Post-translationally, upon exposure to beta-lactams, proteolytic cleavage at a single site impairs dimerization and abolishes repressor activity.

The protein localises to the cytoplasm. In terms of biological role, transcriptional repressor that constitutively blocks the transcription of the gene for the penicillin-binding protein MecA. Binds palindromic DNA with the sequence 5'-TACA-[AT]-N-TGTA-3'. Regulates genes involved in antibiotic resistance. Binds DNA as a dimer. This chain is Methicillin resistance regulatory protein MecI (mecI), found in Staphylococcus aureus (strain N315).